The chain runs to 147 residues: uncharacterized protein (147 aa).

Residues 23–48 are disordered; that stretch reads EEVSQPEPNTANDSSTEYKGKSKDDF. The segment covering 28–37 has biased composition (polar residues); sequence PEPNTANDSS. The segment covering 38–48 has biased composition (basic and acidic residues); it reads TEYKGKSKDDF. The chain crosses the membrane as a helical span at residues 85–105; the sequence is LMFCIIACSFICAIQFLFFII.

Its subcellular location is the membrane. This is an uncharacterized protein from Saccharomyces cerevisiae (strain ATCC 204508 / S288c) (Baker's yeast).